The chain runs to 166 residues: Cofilin-2 (166 aa).

Alanine 2 bears the N-acetylalanine mark. Serine 3 carries the phosphoserine modification. One can recognise an ADF-H domain in the interval 4–153; that stretch reads GVTVNDEVIK…KDRSTLGEKL (150 aa). A Phosphothreonine modification is found at threonine 6. A Nuclear localization signal motif is present at residues 30–34; that stretch reads KKRKK.

This sequence belongs to the actin-binding proteins ADF family. Post-translationally, the phosphorylation of Ser-24 may prevent recognition of the nuclear localization signal.

It localises to the nucleus matrix. The protein localises to the cytoplasm. It is found in the cytoskeleton. In terms of biological role, controls reversibly actin polymerization and depolymerization in a pH-sensitive manner. It has the ability to bind G- and F-actin in a 1:1 ratio of cofilin to actin. It is the major component of intranuclear and cytoplasmic actin rods. This is Cofilin-2 (CFL2) from Bos taurus (Bovine).